The following is a 551-amino-acid chain: CTP synthase (551 aa).

Positions 1 to 273 are amidoligase domain; that stretch reads MKNTTNTKRT…DSKILELLNI (273 aa). A CTP-binding site is contributed by Ser-21. Residue Ser-21 participates in UTP binding. ATP is bound by residues 22-27 and Asp-79; that span reads SLGKGL. Mg(2+) contacts are provided by Asp-79 and Glu-147. CTP contacts are provided by residues 154-156, 194-199, and Lys-230; these read DIE and KTKPTQ. Residues 194-199 and Lys-230 each bind UTP; that span reads KTKPTQ. One can recognise a Glutamine amidotransferase type-1 domain in the interval 298–551; the sequence is TIAITGKYVD…ISAAVANKKG (254 aa). Residue Gly-360 participates in L-glutamine binding. Cys-387 functions as the Nucleophile; for glutamine hydrolysis in the catalytic mechanism. L-glutamine-binding positions include 388–391, Glu-411, and Arg-479; that span reads LGMQ. Catalysis depends on residues His-524 and Glu-526.

Belongs to the CTP synthase family. In terms of assembly, homotetramer.

The catalysed reaction is UTP + L-glutamine + ATP + H2O = CTP + L-glutamate + ADP + phosphate + 2 H(+). It catalyses the reaction L-glutamine + H2O = L-glutamate + NH4(+). It carries out the reaction UTP + NH4(+) + ATP = CTP + ADP + phosphate + 2 H(+). The protein operates within pyrimidine metabolism; CTP biosynthesis via de novo pathway; CTP from UDP: step 2/2. With respect to regulation, allosterically activated by GTP, when glutamine is the substrate; GTP has no effect on the reaction when ammonia is the substrate. The allosteric effector GTP functions by stabilizing the protein conformation that binds the tetrahedral intermediate(s) formed during glutamine hydrolysis. Inhibited by the product CTP, via allosteric rather than competitive inhibition. Its function is as follows. Catalyzes the ATP-dependent amination of UTP to CTP with either L-glutamine or ammonia as the source of nitrogen. Regulates intracellular CTP levels through interactions with the four ribonucleotide triphosphates. This chain is CTP synthase, found in Desulfotalea psychrophila (strain LSv54 / DSM 12343).